The following is a 127-amino-acid chain: MARVKRAVNAHKKRRVILERAKGYRGQRSRLYRKAKEQLLHSFVYSYGDRRKRKGDFRRLWIQRINAASRANGLTYNRLIQGLKAASIEVDRRMLSELAVNDAAAFAGLVKLAKAALPADTSAPVAN.

The protein belongs to the bacterial ribosomal protein bL20 family.

In terms of biological role, binds directly to 23S ribosomal RNA and is necessary for the in vitro assembly process of the 50S ribosomal subunit. It is not involved in the protein synthesizing functions of that subunit. The polypeptide is Large ribosomal subunit protein bL20 (Renibacterium salmoninarum (strain ATCC 33209 / DSM 20767 / JCM 11484 / NBRC 15589 / NCIMB 2235)).